Here is a 285-residue protein sequence, read N- to C-terminus: Methanethiol S-methyltransferase 1 (285 aa).

Transmembrane regions (helical) follow at residues 55–75, 88–108, 132–152, 162–182, and 224–244; these read AYLVFFVTILYAIGFVMGLVV, AEAVIINLLLMALFAVQHSVM, LFASLSLLLLFWQWRPLPTVI, VTLVTVSFAGWVLVFTSTFII, and FIVAFWAAPVMTAGHLLFAAV.

This sequence belongs to the nurim family.

Its subcellular location is the membrane. The catalysed reaction is methanethiol + S-adenosyl-L-methionine = dimethyl sulfide + S-adenosyl-L-homocysteine + H(+). Catalyzes the methylation of methanethiol (MeSH) to yield dimethylsulphide (DMS). This Bradyrhizobium diazoefficiens (strain JCM 10833 / BCRC 13528 / IAM 13628 / NBRC 14792 / USDA 110) protein is Methanethiol S-methyltransferase 1.